A 397-amino-acid chain; its full sequence is Probable inactive purple acid phosphatase 28 (397 aa).

The first 30 residues, 1–30 (MNCSIGNWKHTVLYLTLIVSLLYFIESLIS), serve as a signal peptide directing secretion. N-linked (GlcNAc...) asparagine glycans are attached at residues Asn-91 and Asn-209. Residues His-266 and His-314 each coordinate Zn(2+). A substrate-binding site is contributed by 314-316 (HDH). Fe cation is bound at residue His-316.

Belongs to the metallophosphoesterase superfamily. Purple acid phosphatase family. In terms of assembly, homodimer. The cofactor is Fe cation. It depends on Zn(2+) as a cofactor. Expressed in roots, stems, leaves, flowers and siliques.

The protein localises to the secreted. This is Probable inactive purple acid phosphatase 28 (PAP28) from Arabidopsis thaliana (Mouse-ear cress).